Here is a 91-residue protein sequence, read N- to C-terminus: Large ribosomal subunit protein bL31B (91 aa).

The protein belongs to the bacterial ribosomal protein bL31 family. Type B subfamily. As to quaternary structure, part of the 50S ribosomal subunit.

This Neisseria meningitidis serogroup A / serotype 4A (strain DSM 15465 / Z2491) protein is Large ribosomal subunit protein bL31B.